The primary structure comprises 347 residues: MSNLTVGCLANATVCEGASCVAPESNFNAILSVVLSTVLTILLALVMFSMGCNVEIKKFLGHIRRPWGIFIGFLCQFGIMPLTGFVLAVAFGIMPIQAVVVLIMGCCPGGTASNILAYWVDGDMDLSVSMTTCSTLLALGMMPLCLYVYTKMWVDSGTIVIPYDNIGTSLVALVVPVSIGMFVNHKWPQKAKIILKVGSIAGAVLIVLIAVVGGILYQSAWIIEPKLWIIGTIFPMAGYSLGFFLARIAGQPWYRCRTVALETGMQNTQLCSTIVQLSFSPEDLTYVFTFPLIYSIFQIAFAAIFLGIYVAYRKCHGKNDAEFPDIKDTKTEPESSFHQMNGGFQPE.

At 1-29 (MSNLTVGCLANATVCEGASCVAPESNFNA) the chain is on the extracellular side. Asn-3 and Asn-11 each carry an N-linked (GlcNAc...) asparagine glycan. A helical transmembrane segment spans residues 30–50 (ILSVVLSTVLTILLALVMFSM). Topologically, residues 51 to 83 (GCNVEIKKFLGHIRRPWGIFIGFLCQFGIMPLT) are cytoplasmic. The chain crosses the membrane as a helical span at residues 84–104 (GFVLAVAFGIMPIQAVVVLIM). At 105 to 127 (GCCPGGTASNILAYWVDGDMDLS) the chain is on the extracellular side. A helical transmembrane segment spans residues 128-148 (VSMTTCSTLLALGMMPLCLYV). Residues 149–158 (YTKMWVDSGT) are Cytoplasmic-facing. A helical membrane pass occupies residues 159-179 (IVIPYDNIGTSLVALVVPVSI). The Extracellular portion of the chain corresponds to 180 to 196 (GMFVNHKWPQKAKIILK). Residues 197-217 (VGSIAGAVLIVLIAVVGGILY) form a helical membrane-spanning segment. Residues 218–225 (QSAWIIEP) lie on the Cytoplasmic side of the membrane. Residues 226-246 (KLWIIGTIFPMAGYSLGFFLA) traverse the membrane as a helical segment. Residues 247-289 (RIAGQPWYRCRTVALETGMQNTQLCSTIVQLSFSPEDLTYVFT) lie on the Extracellular side of the membrane. The chain crosses the membrane as a helical span at residues 290–310 (FPLIYSIFQIAFAAIFLGIYV). The Cytoplasmic segment spans residues 311–347 (AYRKCHGKNDAEFPDIKDTKTEPESSFHQMNGGFQPE). A compositionally biased stretch (basic and acidic residues) spans 323 to 335 (FPDIKDTKTEPES). The interval 323-347 (FPDIKDTKTEPESSFHQMNGGFQPE) is disordered. Ser-336 is subject to Phosphoserine.

It belongs to the bile acid:sodium symporter (BASS) (TC 2.A.28) family. As to quaternary structure, monomer and homodimer.

The protein localises to the membrane. It carries out the reaction taurocholate(out) + 2 Na(+)(out) = taurocholate(in) + 2 Na(+)(in). It catalyses the reaction cholate(out) + 2 Na(+)(out) = cholate(in) + 2 Na(+)(in). The enzyme catalyses taurochenodeoxycholate(out) + 2 Na(+)(out) = taurochenodeoxycholate(in) + 2 Na(+)(in). The catalysed reaction is tauroursodeoxycholate(out) + 2 Na(+)(out) = tauroursodeoxycholate(in) + 2 Na(+)(in). It carries out the reaction glycocholate(out) + 2 Na(+)(out) = glycocholate(in) + 2 Na(+)(in). It catalyses the reaction tauronorcholate(out) + 2 Na(+)(out) = tauronorcholate(in) + 2 Na(+)(in). The enzyme catalyses tauroallocholate(out) + 2 Na(+)(out) = tauroallocholate(in) + 2 Na(+)(in). The catalysed reaction is taurodeoxycholate(out) + 2 Na(+)(out) = taurodeoxycholate(in) + 2 Na(+)(in). It carries out the reaction tauro-beta-muricholate(out) + 2 Na(+)(out) = tauro-beta-muricholate(in) + 2 Na(+)(in). Its function is as follows. Plays a critical role in the sodium-dependent reabsorption of bile acids from the lumen of the small intestine. Transports various bile acids, unconjugated or conjugated, such as cholate and taurocholate. Also responsible for bile acid transport in the renal proximal tubules, a salvage mechanism that helps conserve bile acids. Works collaboratively with the Na(+)-taurocholate cotransporting polypeptide (NTCP), the organic solute transporter (OST), and the bile salt export pump (BSEP), to ensure efficacious biological recycling of bile acids during enterohepatic circulation. This chain is Ileal sodium/bile acid cotransporter (SLC10A2), found in Oryctolagus cuniculus (Rabbit).